Here is a 372-residue protein sequence, read N- to C-terminus: GPN-loop GTPase 1 (372 aa).

Residue alanine 2 is modified to N-acetylalanine. 29–34 (GSGKTT) is a GTP binding site. Positions 86–88 (GPN) match the Gly-Pro-Asn (GPN)-loop; involved in dimer interface motif. 189–192 (NKTD) contributes to the GTP binding site. Phosphoserine occurs at positions 301 and 314. Positions 303–372 (ALDPEAGKGN…ESMAHWKRNK (70 aa)) are disordered. At threonine 328 the chain carries Phosphothreonine. Positions 330 to 342 (DEEDEEADSDTDD) are enriched in acidic residues. The residue at position 338 (serine 338) is a Phosphoserine. Phosphothreonine is present on threonine 340. Residues 343-355 (IDHRVTEESREEP) show a composition bias toward basic and acidic residues.

The protein belongs to the GPN-loop GTPase family. As to quaternary structure, heterodimer with GPN3. Binds to RNA polymerase II (RNAPII). Interacts directly with RNAPII subunits RPB4 and RPB7 and the CTD of RPB1. Interacts with XPA.

The protein resides in the cytoplasm. Its subcellular location is the nucleus. In terms of biological role, small GTPase required for proper nuclear import of RNA polymerase II (RNAPII). May act at an RNAP assembly step prior to nuclear import. Forms an interface between the RNA polymerase II enzyme and chaperone/scaffolding proteins, suggesting that it is required to connect RNA polymerase II to regulators of protein complex formation. May be involved in nuclear localization of XPA. This Mus musculus (Mouse) protein is GPN-loop GTPase 1.